The following is a 596-amino-acid chain: Ubiquilin-4 (596 aa).

The 75-residue stretch at 13 to 87 folds into the Ubiquitin-like domain; sequence IRVTVKTPKD…VHLVIKTPQK (75 aa). Residues lysine 23 and lysine 62 each participate in a glycyl lysine isopeptide (Lys-Gly) (interchain with G-Cter in SUMO2) cross-link. The tract at residues 89 to 148 is disordered; sequence QDPVTAAASPPSTPDSASAPSTTPASPAAAPVQPCSSGNTTSDAGSGGGPSPVAAEGPSS. Composition is skewed to low complexity over residues 93–119 and 139–148; these read TAAA…AAAP and SPVAAEGPSS. Serine 139 carries the post-translational modification Phosphoserine. 2 STI1 domains span residues 187–224 and 225–256; these read NPEM…QQLM and ERNP…MQEM. Residue threonine 282 is modified to Phosphothreonine. Positions 297–361 are disordered; the sequence is GNNPFSSLAG…QVHPTVSNPF (65 aa). Residues 302-313 are compositionally biased toward low complexity; sequence SSLAGNSDNSSS. Serine 313 is modified (phosphoserine). Residues 324-335 are compositionally biased toward pro residues; that stretch reads LPNPWSPSPPTS. Positions 339-349 are enriched in gly residues; the sequence is GSGGEGTGGSG. Residues 352-361 show a composition bias toward polar residues; that stretch reads QVHPTVSNPF. 2 consecutive STI1 domains span residues 388–435 and 439–471; these read NPQL…QEQL and LPVF…QQGL. The disordered stretch occupies residues 482 to 528; the sequence is VPSLGSFGTPRTSVPLAGSNSGSSAEAPTSSPGVPATSPPSAGSNAQ. Positions 499-513 are enriched in polar residues; the sequence is GSNSGSSAEAPTSSP. A UBA domain is found at 548-593; sequence PMPEVRFQQQLEQLNSMGFINREANLQALIATGGDINAAIERLLGS.

In terms of assembly, homooligomer. Binds signal sequences of proteins that are targeted to the endoplasmic reticulum. Interacts (via UBA domain) with GJA1 (not ubiquitinated) and with ubiquitin; both compete for the same binding site. Interacts (via UBA domain) with ubiquitin and with polyubiquitin chains. Interacts (via ubiquitin-like domain) with PSMD2 and PSMD4, regulatory subunits of the 26S proteasome. Interacts with ATXN1/SCA1; interaction with ATXN1 inhibits polyubiquitination of UBQLN4 and interferes with PSMD4 binding. Interacts with HERPUD1. Interacts (via ubiquitin-like domain) with UBQLN1 (via UBA domain). Interacts with UBQLN2. Interacts (via STI1 1 and 2 domains) with MAP1LC3A/B/C. Interacts with BAG6. Interacts with MRE11 (when ubiquitinated); interaction with ubiquitinated MRE11 leads to MRE11 removal from chromatin. Interacts with DESI1/POST; leading to nuclear export. Interacts with BCL2A1 and BCL2L10. In terms of processing, phosphorylated by ATM at Ser-313 in response to DNA damage, leading to localization in the nucleus and recruitment to sites of DNA damage. Ubiquitinated; this does not lead to proteasomal degradation. May undergo both 'Lys-48'- and 'Lys-63'-linked polyubiquitination. In terms of tissue distribution, detected in testis, ovary, thyroid, kidney, thymus, heart, liver, lung and spleen (at protein level). Highly expressed in heart, skeletal muscle, kidney, liver and brain. Detected at lower levels in testis, lung and spleen.

The protein localises to the nucleus. It localises to the cytoplasm. The protein resides in the chromosome. It is found in the endoplasmic reticulum. Its subcellular location is the perinuclear region. The protein localises to the cytoplasmic vesicle. It localises to the autophagosome. Regulator of protein degradation that mediates the proteasomal targeting of misfolded, mislocalized or accumulated proteins. Acts by binding polyubiquitin chains of target proteins via its UBA domain and by interacting with subunits of the proteasome via its ubiquitin-like domain. Key regulator of DNA repair that represses homologous recombination repair: in response to DNA damage, recruited to sites of DNA damage following phosphorylation by ATM and acts by binding and removing ubiquitinated MRE11 from damaged chromatin, leading to MRE11 degradation by the proteasome. MRE11 degradation prevents homologous recombination repair, redirecting double-strand break repair toward non-homologous end joining (NHEJ). Specifically recognizes and binds mislocalized transmembrane-containing proteins and targets them to proteasomal degradation. Collaborates with DESI1/POST in the export of ubiquitinated proteins from the nucleus to the cytoplasm. Plays a role in the regulation of the proteasomal degradation of non-ubiquitinated GJA1. Acts as an adapter protein that recruits UBQLN1 to the autophagy machinery. Mediates the association of UBQLN1 with autophagosomes and the autophagy-related protein LC3 (MAP1LC3A/B/C) and may assist in the maturation of autophagosomes to autolysosomes by mediating autophagosome-lysosome fusion. This Mus musculus (Mouse) protein is Ubiquilin-4.